The chain runs to 316 residues: Pantothenate kinase (316 aa).

95–102 (GSVAVGKS) contributes to the ATP binding site.

It belongs to the prokaryotic pantothenate kinase family.

It localises to the cytoplasm. The enzyme catalyses (R)-pantothenate + ATP = (R)-4'-phosphopantothenate + ADP + H(+). Its pathway is cofactor biosynthesis; coenzyme A biosynthesis; CoA from (R)-pantothenate: step 1/5. This chain is Pantothenate kinase, found in Shewanella sp. (strain MR-4).